Reading from the N-terminus, the 366-residue chain is Peptide chain release factor 2 (366 aa).

N5-methylglutamine is present on Q251.

It belongs to the prokaryotic/mitochondrial release factor family. In terms of processing, methylated by PrmC. Methylation increases the termination efficiency of RF2.

Its subcellular location is the cytoplasm. Peptide chain release factor 2 directs the termination of translation in response to the peptide chain termination codons UGA and UAA. This chain is Peptide chain release factor 2, found in Exiguobacterium sp. (strain ATCC BAA-1283 / AT1b).